The primary structure comprises 670 residues: Methionine--tRNA ligase (670 aa).

Residues 14-24 (PYANGHLHLGH) carry the 'HIGH' region motif. 4 residues coordinate Zn(2+): Cys-145, Cys-148, Cys-158, and Cys-161. The 'KMSKS' region motif lies at 330–334 (KMSKS). ATP is bound at residue Lys-333. The tRNA-binding domain occupies 570-670 (DFAKVDLRIA…AGALPGMKVK (101 aa)).

Belongs to the class-I aminoacyl-tRNA synthetase family. MetG type 1 subfamily. In terms of assembly, homodimer. Zn(2+) is required as a cofactor.

It localises to the cytoplasm. It catalyses the reaction tRNA(Met) + L-methionine + ATP = L-methionyl-tRNA(Met) + AMP + diphosphate. Its function is as follows. Is required not only for elongation of protein synthesis but also for the initiation of all mRNA translation through initiator tRNA(fMet) aminoacylation. The protein is Methionine--tRNA ligase of Legionella pneumophila (strain Paris).